The following is a 125-amino-acid chain: UPF0332 protein AF_0298 (125 aa).

The protein belongs to the UPF0332 family.

This chain is UPF0332 protein AF_0298, found in Archaeoglobus fulgidus (strain ATCC 49558 / DSM 4304 / JCM 9628 / NBRC 100126 / VC-16).